Reading from the N-terminus, the 355-residue chain is DNA polymerase IV (355 aa).

The UmuC domain occupies 14–198; it reads IIHVDMDAFF…LPVEKFHGVG (185 aa). 2 residues coordinate Mg(2+): Asp-18 and Asp-116. Residue Glu-117 is part of the active site.

The protein belongs to the DNA polymerase type-Y family. In terms of assembly, monomer. It depends on Mg(2+) as a cofactor.

Its subcellular location is the cytoplasm. It carries out the reaction DNA(n) + a 2'-deoxyribonucleoside 5'-triphosphate = DNA(n+1) + diphosphate. Functionally, poorly processive, error-prone DNA polymerase involved in untargeted mutagenesis. Copies undamaged DNA at stalled replication forks, which arise in vivo from mismatched or misaligned primer ends. These misaligned primers can be extended by PolIV. Exhibits no 3'-5' exonuclease (proofreading) activity. May be involved in translesional synthesis, in conjunction with the beta clamp from PolIII. The chain is DNA polymerase IV from Streptococcus suis (strain 98HAH33).